A 321-amino-acid polypeptide reads, in one-letter code: 2,3,4,5-tetrahydropyridine-2,6-dicarboxylate N-succinyltransferase (321 aa).

Aspartate 166 and glutamate 183 together coordinate Mg(2+). The active-site Acyl-anhydride intermediate is glutamate 199. Residues arginine 201, glycine 216, serine 219, alanine 242, 257–258 (EA), glycine 265, lysine 281, and 294–297 (RRNS) contribute to the succinyl-CoA site.

It belongs to the type 2 tetrahydrodipicolinate N-succinyltransferase family. Homotrimer.

It is found in the cytoplasm. The catalysed reaction is (S)-2,3,4,5-tetrahydrodipicolinate + succinyl-CoA + H2O = (S)-2-succinylamino-6-oxoheptanedioate + CoA. Its pathway is amino-acid biosynthesis; L-lysine biosynthesis via DAP pathway; LL-2,6-diaminopimelate from (S)-tetrahydrodipicolinate (succinylase route): step 1/3. Its function is as follows. Catalyzes the conversion of the cyclic tetrahydrodipicolinate (THDP) into the acyclic N-succinyl-L-2-amino-6-oxopimelate using succinyl-CoA. This chain is 2,3,4,5-tetrahydropyridine-2,6-dicarboxylate N-succinyltransferase, found in Rothia mucilaginosa (strain DY-18) (Stomatococcus mucilaginosus).